The chain runs to 308 residues: D-alanine--D-alanine ligase (308 aa).

The ATP-grasp domain occupies 102 to 302; the sequence is KHVAKAAGIP…FGEFLRWMVE (201 aa). Position 128–183 (128–183) interacts with ATP; the sequence is PMKPPYVVKPVREGSSFGVVIVKEDQSHPPQVITSSEWRYGDRVMVERYIAGREFT. The Mg(2+) site is built by D252, E269, and N271.

Belongs to the D-alanine--D-alanine ligase family. Requires Mg(2+) as cofactor. It depends on Mn(2+) as a cofactor.

Its subcellular location is the cytoplasm. It catalyses the reaction 2 D-alanine + ATP = D-alanyl-D-alanine + ADP + phosphate + H(+). Its pathway is cell wall biogenesis; peptidoglycan biosynthesis. Its function is as follows. Cell wall formation. The polypeptide is D-alanine--D-alanine ligase (Rhizobium meliloti (strain 1021) (Ensifer meliloti)).